The chain runs to 642 residues: Tigger transposable element derived 5 (642 aa).

Residues 1-54 (MYPASPPAGPALHPVPHRARLPQPRCLAEPPRSPAPGPGSTARPPPPPAPGPRP) form a disordered region. Residues 31–53 (PRSPAPGPGSTARPPPPPAPGPR) show a composition bias toward pro residues. The HTH psq-type domain maps to 57 to 108 (AVKMTFRKAYSIKDKLQAIERVKGGERQASVCRDFGVPGGTLRGWLKDEPKL). 2 DNA-binding regions (H-T-H motif) span residues 84–104 (QASV…WLKD) and 155–188 (PVIQ…WQKR). The HTH CENPB-type domain occupies 122-195 (QRKKMRLANE…QKRHGISSQR (74 aa)). The tract at residues 202 to 238 (SPVAGPAPVKEEPAQSPGAVLVPDGAPATLPHSEGGY) is disordered. In terms of domain architecture, DDE-1 spans 240-365 (DEQIYNANVT…CLQQKAVLLV (126 aa)). Disordered stretches follow at residues 375 to 400 (TSMP…SPEE) and 548 to 581 (GCRE…TEQG).

This sequence belongs to the tigger transposable element derived protein family.

Its subcellular location is the nucleus. The sequence is that of Tigger transposable element derived 5 (Tigd5) from Mus musculus (Mouse).